We begin with the raw amino-acid sequence, 332 residues long: Biotin synthase (332 aa).

The 231-residue stretch at 53–283 folds into the Radical SAM core domain; it reads WGKGGIHACS…VHPHSIIKFA (231 aa). 3 residues coordinate [4Fe-4S] cluster: C71, C75, and C78. Positions 150, 211, and 281 each coordinate [2Fe-2S] cluster.

Belongs to the radical SAM superfamily. Biotin synthase family. As to quaternary structure, homodimer. Requires [4Fe-4S] cluster as cofactor. It depends on [2Fe-2S] cluster as a cofactor.

It catalyses the reaction (4R,5S)-dethiobiotin + (sulfur carrier)-SH + 2 reduced [2Fe-2S]-[ferredoxin] + 2 S-adenosyl-L-methionine = (sulfur carrier)-H + biotin + 2 5'-deoxyadenosine + 2 L-methionine + 2 oxidized [2Fe-2S]-[ferredoxin]. It functions in the pathway cofactor biosynthesis; biotin biosynthesis; biotin from 7,8-diaminononanoate: step 2/2. In terms of biological role, catalyzes the conversion of dethiobiotin (DTB) to biotin by the insertion of a sulfur atom into dethiobiotin via a radical-based mechanism. The sequence is that of Biotin synthase from Chlorobium phaeovibrioides (strain DSM 265 / 1930) (Prosthecochloris vibrioformis (strain DSM 265)).